The primary structure comprises 501 residues: MSFGSEHYLCSASSYRKVFGDSSRLSARLSGPGGSGSFRSQSLSRSNVASTAACSSASSLGLGLAYRRLPASDGLDLSQAAARTNEYKIIRTNEKEQLQGLNDRFAVFIEKVHQLETQNRALEAELAALRQRHAEPSRVGELFQRELRELRAQLEEASSARAQALLERDGLAEEVQRLRARCEEESRGREGAERALKAQQRDVDGATLARLDLEKKVESLLDELAFVRQVHDEEVAELLATLQASSQAAAEVDVAVAKPDLTSALREIRAQYESLAAKNLQSAEEWYKSKFANLNEQAARSTEAIRASREEIHEYRRQLQARTIEIEGLRGANESLERQILELEERHSAEVAGYQDSIGQLESDLRNTKSEMARHLREYQDLLNVKMALDIEIAAYRKLLEGEETRFSTGGLSISGLNPLPNPSYLLPPRILSSTASKVSSAGLSLKKEEEEEEEEASKEVSKKTSKVGEGFEETLGEAVISTKKTGKSATEESTSSSQKM.

Positions 1-87 (MSFGSEHYLC…SQAAARTNEY (87 aa)) are head. At serine 72 the chain carries Phosphoserine. Residues 88–129 (KIIRTNEKEQLQGLNDRFAVFIEKVHQLETQNRALEAELAAL) are coil 1A. Positions 94-407 (EKEQLQGLND…KLLEGEETRF (314 aa)) constitute an IF rod domain. Residues 130-142 (RQRHAEPSRVGEL) are linker 1. A coil 1B region spans residues 143-238 (FQRELRELRA…QVHDEEVAEL (96 aa)). Phosphoserine is present on serine 219. Residues 239 to 262 (LATLQASSQAAAEVDVAVAKPDLT) are linker 2. A coil 2 region spans residues 263–408 (SALREIRAQY…LLEGEETRFS (146 aa)). The residue at position 290 (lysine 290) is an N6-acetyllysine. Residues serine 335 and serine 498 each carry the phosphoserine modification. The tail stretch occupies residues 409-501 (TGGLSISGLN…EESTSSSQKM (93 aa)). Residues 441–501 (SAGLSLKKEE…EESTSSSQKM (61 aa)) form a disordered region. Polar residues predominate over residues 488 to 501 (KSATEESTSSSQKM).

The protein belongs to the intermediate filament family. Forms homodimers (in vitro). Forms heterodimers with NEFL, NEFM or NEFH (in vitro). Post-translationally, O-glycosylated.

Its function is as follows. Class-IV neuronal intermediate filament that is able to self-assemble. It is involved in the morphogenesis of neurons. It may form an independent structural network without the involvement of other neurofilaments or it may cooperate with NEFL to form the filamentous backbone to which NEFM and NEFH attach to form the cross-bridges. May also cooperate with the neuronal intermediate filament protein PRPH to form filamentous networks. This Mus musculus (Mouse) protein is Alpha-internexin (Ina).